The following is a 694-amino-acid chain: Elongation factor G (694 aa).

Residues 9–288 enclose the tr-type G domain; sequence DAIRNIGIMA…VIVKWLPSPL (280 aa). GTP-binding positions include 18–25, 82–86, and 136–139; these read AHIDAGKT, DTPGH, and NKMD.

Belongs to the TRAFAC class translation factor GTPase superfamily. Classic translation factor GTPase family. EF-G/EF-2 subfamily.

The protein resides in the cytoplasm. In terms of biological role, catalyzes the GTP-dependent ribosomal translocation step during translation elongation. During this step, the ribosome changes from the pre-translocational (PRE) to the post-translocational (POST) state as the newly formed A-site-bound peptidyl-tRNA and P-site-bound deacylated tRNA move to the P and E sites, respectively. Catalyzes the coordinated movement of the two tRNA molecules, the mRNA and conformational changes in the ribosome. This Chlamydia trachomatis serovar L2b (strain UCH-1/proctitis) protein is Elongation factor G.